The chain runs to 518 residues: Allene oxide synthase, chloroplastic (518 aa).

Residues 1–33 (MASISTPFPISLHPKTVRSKPLKFRVLTRPIKA) constitute a chloroplast transit peptide. Heme b contacts are provided by K133, H164, and K168. (13S)-hydroperoxy-(9Z,11E)-octadecadienoate-binding residues include N321 and T389. N321 and T389 together coordinate (13S)-hydroperoxy-(9Z,11E,15Z)-octadecatrienoate. K469 and C471 together coordinate heme b.

This sequence belongs to the cytochrome P450 family. Heme b serves as cofactor.

It localises to the plastid. Its subcellular location is the chloroplast. The protein localises to the plastoglobule. The enzyme catalyses (13S)-hydroperoxy-(9Z,11E,15Z)-octadecatrienoate = (9Z,13S,15Z)-12,13-epoxyoctadeca-9,11,15-trienoate + H2O. It carries out the reaction (13S)-hydroperoxy-(9Z,11E)-octadecadienoate = (9Z,13S)-12,13-epoxyoctadeca-9,11-dienoate + H2O. It participates in lipid metabolism; oxylipin biosynthesis. Functionally, cytochrome P450 enzyme involved in the biosynthesis of oxylipin jasmonates, important phytohormones acting as growth regulators and signaling molecules for plant defense. Functions as an allene oxide synthase that converts hydroperoxy fatty acids to unstable allene epoxides. Catalyzes the dehydration of 13-HPOTE ((13S)-hydroperoxy-(9Z,11E,15Z)-octadecatrienoate), as well as 13-HPODE ((13S)-hydroperoxy-(9Z,11E)-octadecadienoate). This chain is Allene oxide synthase, chloroplastic (CYP74A), found in Arabidopsis thaliana (Mouse-ear cress).